Reading from the N-terminus, the 212-residue chain is Proheparin-binding EGF-like growth factor (212 aa).

The N-terminal stretch at 1–18 (MDGRVVLIHALLTAVCSA) is a signal peptide. The Extracellular portion of the chain corresponds to 19–167 (AVGKFGRDGP…PSTYDHTTAL (149 aa)). The disordered stretch occupies residues 82 to 108 (SKPQGPVTPKKKGNGNKRRKGKGLGKK). A compositionally biased stretch (basic residues) spans 90 to 106 (PKKKGNGNKRRKGKGLG). The region spanning 108–148 (KRDPCLRKYKDFCIHGECKYIRELGAPSCICQPGYHGERCH) is the EGF-like domain. 3 disulfide bridges follow: Cys112-Cys125, Cys120-Cys136, and Cys138-Cys147. A propeptide spans 153-212 (PVEHPPSTYDHTTALAVVAVVLSSLCLVIITALLMFRCHKRGVYDVENEEKIKLGITVNH) (C-terminal). Residues 168 to 188 (AVVAVVLSSLCLVIITALLMF) form a helical membrane-spanning segment. Residues 189-212 (RCHKRGVYDVENEEKIKLGITVNH) lie on the Cytoplasmic side of the membrane.

In terms of assembly, interacts with CNIH2.

The protein resides in the secreted. The protein localises to the extracellular space. It is found in the cell membrane. Functionally, may be involved in macrophage-mediated cellular proliferation. It is mitogenic for fibroblasts and smooth muscle but not endothelial cells. It is able to bind EGF receptor/EGFR with higher affinity than EGF itself and is a far more potent mitogen for smooth muscle cells than EGF. Plays an important role in the proper development of cranial nerves by inhibiting the migration of the cranial neural crest cells (NCCs) into the odd-numbered neuromeres (r3 and r5) of the hindbrain Plays a role in mediating v-Jun-induced oncogenic transformation. The sequence is that of Proheparin-binding EGF-like growth factor (HBEGF) from Gallus gallus (Chicken).